The chain runs to 88 residues: UPF0213 protein EF_2693 (88 aa).

The GIY-YIG domain occupies 5–82 (KSHYFYVLLC…KKLTRKQKEQ (78 aa)).

Belongs to the UPF0213 family.

The sequence is that of UPF0213 protein EF_2693 from Enterococcus faecalis (strain ATCC 700802 / V583).